The primary structure comprises 552 residues: Ribulokinase (552 aa).

The protein belongs to the ribulokinase family.

It carries out the reaction D-ribulose + ATP = D-ribulose 5-phosphate + ADP + H(+). The enzyme catalyses L-ribulose + ATP = L-ribulose 5-phosphate + ADP + H(+). It functions in the pathway carbohydrate degradation; L-arabinose degradation via L-ribulose; D-xylulose 5-phosphate from L-arabinose (bacterial route): step 2/3. In Bacillus licheniformis (strain ATCC 14580 / DSM 13 / JCM 2505 / CCUG 7422 / NBRC 12200 / NCIMB 9375 / NCTC 10341 / NRRL NRS-1264 / Gibson 46), this protein is Ribulokinase.